Consider the following 183-residue polypeptide: Putative calmodulin-like protein 2 (183 aa).

4 consecutive EF-hand domains span residues E7–S42, P43–D78, G80–P115, and L116–Q151. Ca(2+) contacts are provided by D20, D22, D24, T26, E31, D56, D58, S60, S62, E67, D93, D95, N97, E104, D129, D131, D133, Q135, and E140. The disordered stretch occupies residues M154–L183. 2 S-palmitoyl cysteine lipidation sites follow: C173 and C174. At C180 the chain carries Cysteine methyl ester. C180 is lipidated: S-farnesyl cysteine. The propeptide at T181–L183 is removed in mature form.

The protein belongs to the calmodulin family.

It localises to the membrane. In terms of biological role, potential calcium sensor. The polypeptide is Putative calmodulin-like protein 2 (CML2) (Oryza sativa subsp. japonica (Rice)).